The chain runs to 510 residues: G-protein coupled receptor dmsr-1 (510 aa).

The Extracellular portion of the chain corresponds to 1–35 (MEFTECKTTFIHLPDKSFLYDVFVSVYNFYHPIHA). A helical membrane pass occupies residues 36–56 (YLSIFLCVLGTIANFCNIVVL). Residues 57 to 64 (TRRTMRTP) lie on the Cytoplasmic side of the membrane. Residues 65–85 (VNMILTAMASCDTVVLFSNLI) traverse the membrane as a helical segment. Residues 86-107 (YTTHYSFVAFKFCHPKHWSYSW) are Extracellular-facing. A helical transmembrane segment spans residues 108–128 (ALFLIAHAHLSLVAHSSSVWL). The Cytoplasmic portion of the chain corresponds to 129–155 (SVMLALVRYVTLRSRGNMGGMQVTLRH). Residues 156-176 (SYYAVAVTVSLVAVLNAPNFL) form a helical membrane-spanning segment. At 177–223 (NYKINEQPLNETCTDLDPMFWNSPAYLPGIADIAKANSCLVFRLSYW) the chain is on the extracellular side. The N-linked (GlcNAc...) asparagine glycan is linked to Asn186. Residues 224-244 (ISGMVFKVLPCALLSLFVWLL) form a helical membrane-spanning segment. Residues 245-307 (LRILREVREN…GERVDRTTHM (63 aa)) are Cytoplasmic-facing. A helical membrane pass occupies residues 308-328 (LLAIVAVMLVTELPQGIMAVL). Residues 329–343 (SGMCSEEFRIYIYNN) lie on the Extracellular side of the membrane. Residues 344–364 (LGDILDLFSLCGSCCSFIIYC) traverse the membrane as a helical segment. The Cytoplasmic segment spans residues 365-510 (SMSGQFRNEF…DGIRGHFQNI (146 aa)). A disordered region spans residues 452 to 510 (GCDSITPCSPMPTSFPSSPLPPIRSGEDESTDETSHLLNSSGPNSTASADGIRGHFQNI). Residues 487 to 499 (HLLNSSGPNSTAS) show a composition bias toward polar residues.

The protein belongs to the G-protein coupled receptor 1 family. In terms of tissue distribution, expressed in head neurons including the RID neuron and the paired AIY neurons, and in tail neurons including the paired PHA and PHB neurons. Not expressed in AVE and AVA neurons.

The protein resides in the cell membrane. G-protein coupled receptor. In terms of biological role, G-protein coupled receptor for flp-13 RFamide neuropeptides in vitro. Upon activation by flp-13 RFamide neuropeptides, promotes sleep in response to cellular stress also known as stress-induced sleep (SIS), probably by inhibiting the activity of wake-promoting neurons. This is G-protein coupled receptor dmsr-1 from Caenorhabditis elegans.